Here is a 397-residue protein sequence, read N- to C-terminus: Chorismate synthase (397 aa).

Arginine 40 and arginine 46 together coordinate NADP(+). FMN is bound by residues 129–131 (RSS), 257–258 (QA), glycine 302, 317–321 (KPISS), and arginine 343.

The protein belongs to the chorismate synthase family. As to quaternary structure, homotetramer. It depends on FMNH2 as a cofactor.

It catalyses the reaction 5-O-(1-carboxyvinyl)-3-phosphoshikimate = chorismate + phosphate. Its pathway is metabolic intermediate biosynthesis; chorismate biosynthesis; chorismate from D-erythrose 4-phosphate and phosphoenolpyruvate: step 7/7. In terms of biological role, catalyzes the anti-1,4-elimination of the C-3 phosphate and the C-6 proR hydrogen from 5-enolpyruvylshikimate-3-phosphate (EPSP) to yield chorismate, which is the branch point compound that serves as the starting substrate for the three terminal pathways of aromatic amino acid biosynthesis. This reaction introduces a second double bond into the aromatic ring system. This Chlorobium phaeovibrioides (strain DSM 265 / 1930) (Prosthecochloris vibrioformis (strain DSM 265)) protein is Chorismate synthase.